The primary structure comprises 99 residues: MNKTEFIAYMTEHCHNNKHAAHKTLTKADAEKALNLVIDSVISAIKSKHNVNLTGFGSFEIHHRKAREGRNPKTGAKMTIDAYNQPTFRAGRKLKEACN.

It belongs to the bacterial histone-like protein family. In terms of assembly, homodimer.

Histone-like DNA-binding protein which is capable of wrapping DNA to stabilize it, and thus to prevent its denaturation under extreme environmental conditions. In Rickettsia typhi (strain ATCC VR-144 / Wilmington), this protein is DNA-binding protein HU (hup).